The sequence spans 89 residues: Alpha-latrotoxin associated low molecular weight protein SGV242-280 (89 aa).

Residues 1–18 (MSKLHFLILLSVIVSVFC) form the signal peptide.

The protein belongs to the arthropod CHH/MIH/GIH/VIH hormone family. As to expression, expressed by the venom gland.

The protein resides in the secreted. Its function is as follows. May increase the toxicity of alpha-latrotoxin and/or other venom components. Is non-toxic to mice and to the cockroach Periplaneta americana. This Steatoda grossa (False black widow) protein is Alpha-latrotoxin associated low molecular weight protein SGV242-280.